Here is a 673-residue protein sequence, read N- to C-terminus: Beta-galactosidase GalA (673 aa).

Arginine 105 serves as a coordination point for substrate. Cysteine 109 is a Zn(2+) binding site. Asparagine 143 lines the substrate pocket. The active-site Proton donor is glutamate 144. Cysteine 149, cysteine 151, and cysteine 154 together coordinate Zn(2+). The active-site Nucleophile is the glutamate 308. Residues tryptophan 316 and 356-359 contribute to the substrate site; that span reads EKFH.

Belongs to the glycosyl hydrolase 42 family. Homodimer.

The catalysed reaction is Hydrolysis of terminal non-reducing beta-D-galactose residues in beta-D-galactosides.. Its activity is regulated as follows. Inhibited by hydrolysis end products D-galactose and D-glucose. The hydrolysis of o-nitrophenyl-beta-D-galactopyranoside (ONPG) is slightly activated by monovalent ions, Na(+) and K(+). Concentrations of these ions in the range of 1-100 mM exert the stimulating effects. The presence of 1 mM Mn(2+) together with the presence of 10 mM Na(+) slightly stimulates the activity, while presence of 10 mM Mn(2+) inhibits the activity by about 40%. Functionally, catalyzes the hydrolysis of lactose to its constituent monosaccharides glucose and galactose. Possesses a low level of transgalactosylation activity for the production of galacto-oligosaccharides (GOS) from lactose. This is Beta-galactosidase GalA from Bacillus licheniformis (strain ATCC 14580 / DSM 13 / JCM 2505 / CCUG 7422 / NBRC 12200 / NCIMB 9375 / NCTC 10341 / NRRL NRS-1264 / Gibson 46).